A 231-amino-acid polypeptide reads, in one-letter code: Large ribosomal subunit protein uL1 (231 aa).

It belongs to the universal ribosomal protein uL1 family. In terms of assembly, part of the 50S ribosomal subunit.

In terms of biological role, binds directly to 23S rRNA. The L1 stalk is quite mobile in the ribosome, and is involved in E site tRNA release. Functionally, protein L1 is also a translational repressor protein, it controls the translation of the L11 operon by binding to its mRNA. In Chlorobaculum tepidum (strain ATCC 49652 / DSM 12025 / NBRC 103806 / TLS) (Chlorobium tepidum), this protein is Large ribosomal subunit protein uL1.